Consider the following 780-residue polypeptide: Aconitate hydratase, mitochondrial (780 aa).

Residues 1-27 (MAPYSLLVTRLQKALGVRQYHVASVLC) constitute a mitochondrion transit peptide. Position 31 is an N6-succinyllysine (Lys31). Lys50 carries the post-translational modification N6-acetyllysine; alternate. N6-succinyllysine; alternate is present on Lys50. Gln99 contacts substrate. 2 positions are modified to N6-acetyllysine; alternate: Lys138 and Lys144. Lys138 and Lys144 each carry N6-succinyllysine; alternate. Substrate is bound at residue 192–194 (DSH). At Lys233 the chain carries N6-acetyllysine; alternate. An N6-succinyllysine; alternate modification is found at Lys233. Cys385 serves as a coordination point for [4Fe-4S] cluster. Lys411 carries the N6-succinyllysine modification. [4Fe-4S] cluster is bound by residues Cys448 and Cys451. The substrate site is built by Arg474 and Arg479. Lys517 and Lys523 each carry N6-acetyllysine; alternate. N6-succinyllysine; alternate occurs at positions 517 and 523. Residues 524-537 (LEAPDADELPRSDF) show a composition bias toward basic and acidic residues. The segment at 524-560 (LEAPDADELPRSDFDPGQDTYQHPPKDSSGQRVDVSP) is disordered. The residue at position 549 (Lys549) is an N6-succinyllysine. A compositionally biased stretch (polar residues) spans 551 to 560 (SSGQRVDVSP). At Ser559 the chain carries Phosphoserine. Lys573 carries the post-translational modification N6-acetyllysine; alternate. Lys573 carries the N6-succinyllysine; alternate modification. N6-succinyllysine occurs at positions 577 and 591. Lys605 is subject to N6-acetyllysine; alternate. Lys605 carries the N6-succinyllysine; alternate modification. Substrate is bound at residue Arg607. Lys628 carries the post-translational modification N6-succinyllysine. The residue at position 670 (Ser670) is a Phosphoserine. Residue 670 to 671 (SR) participates in substrate binding. Lys689 carries the N6-succinyllysine modification. N6-acetyllysine; alternate is present on residues Lys723 and Lys730. N6-succinyllysine; alternate occurs at positions 723 and 730. An N6-acetyllysine mark is found at Lys736, Lys739, and Lys743.

It belongs to the aconitase/IPM isomerase family. Monomer. Requires [4Fe-4S] cluster as cofactor. In terms of processing, forms covalent cross-links mediated by transglutaminase TGM2, between a glutamine and the epsilon-amino group of a lysine residue, forming homopolymers and heteropolymers.

The protein resides in the mitochondrion. The catalysed reaction is citrate = D-threo-isocitrate. The protein operates within carbohydrate metabolism; tricarboxylic acid cycle; isocitrate from oxaloacetate: step 2/2. Catalyzes the isomerization of citrate to isocitrate via cis-aconitate. The chain is Aconitate hydratase, mitochondrial (Aco2) from Mus musculus (Mouse).